A 568-amino-acid polypeptide reads, in one-letter code: Methyl-accepting chemotaxis protein CtpH (568 aa).

At 1–39 (MPASPGHRDVLGCLVAACVPVQPGNPSRRSMLQQSLRAQ) the chain is on the cytoplasmic side. The chain crosses the membrane as a helical span at residues 40-60 (ILVLLGGSLAALLLIALACFG). Residues 61-216 (SLTGDVRAYR…ISAEARRTML (156 aa)) are Periplasmic-facing. The chain crosses the membrane as a helical span at residues 217–237 (LGSLVLIGASLAVALLSLWLV). Over 238 to 568 (NRNLVRPVQR…LGDALQRLRA (331 aa)) the chain is Cytoplasmic. An HAMP domain is found at 239–291 (RNLVRPVQRLIEHIAQLSHGDFGERIEIRRKDELGKLALAANTLRDFLVDIFD). The 237-residue stretch at 296 to 532 (STRDLDSASG…EISRNLTEIA (237 aa)) folds into the Methyl-accepting transducer domain.

Belongs to the methyl-accepting chemotaxis (MCP) protein family.

Its subcellular location is the cell inner membrane. Chemotactic-signal transducers respond to changes in the concentration of attractants and repellents in the environment, transduce a signal from the outside to the inside of the cell, and facilitate sensory adaptation through the variation of the level of methylation. Chemoreceptor for inorganic phosphate, which is required for taxis at high concentrations of phosphate. Recognizes inorganic phosphate directly. Can also bind to other components that have a pyrophosphate group, including ATP and ADP. The chain is Methyl-accepting chemotaxis protein CtpH from Pseudomonas aeruginosa (strain ATCC 15692 / DSM 22644 / CIP 104116 / JCM 14847 / LMG 12228 / 1C / PRS 101 / PAO1).